Consider the following 35-residue polypeptide: Mu-theraphotoxin-Hd1a (35 aa).

3 disulfide bridges follow: cysteine 2/cysteine 17, cysteine 9/cysteine 24, and cysteine 16/cysteine 31.

It belongs to the neurotoxin 10 (Hwtx-1) family. 22 (Htx-4) subfamily. In terms of tissue distribution, expressed by the venom gland.

The protein localises to the secreted. In terms of biological role, gating-modifier toxin that reversibly and voltage-independently inhibits human Nav1.1/SCN1A and Nav1.7/SCN9A (IC(50)=111 nM). It also shows moderate inhibition on Nav1.2/SCN2A (1 uM inhibits current by 55%), Nav1.6/SCN8A (31%), Nav1.3/SCN5A (27%) and Nav1.4/SCN4A (23%). This toxin inhibits Nav1.7/SCN9A by interacting with the S3b-S4 paddle motif in channel domain II. This Cyriopagopus doriae (Tarantula spider) protein is Mu-theraphotoxin-Hd1a.